Consider the following 693-residue polypeptide: Elongation factor G (693 aa).

Positions 8–282 (EKTRNIGIMA…AVIDYLPSPL (275 aa)) constitute a tr-type G domain. GTP contacts are provided by residues 17–24 (AHVDAGKT), 81–85 (DTPGH), and 135–138 (NKMD).

Belongs to the TRAFAC class translation factor GTPase superfamily. Classic translation factor GTPase family. EF-G/EF-2 subfamily.

The protein resides in the cytoplasm. Functionally, catalyzes the GTP-dependent ribosomal translocation step during translation elongation. During this step, the ribosome changes from the pre-translocational (PRE) to the post-translocational (POST) state as the newly formed A-site-bound peptidyl-tRNA and P-site-bound deacylated tRNA move to the P and E sites, respectively. Catalyzes the coordinated movement of the two tRNA molecules, the mRNA and conformational changes in the ribosome. This chain is Elongation factor G, found in Streptococcus suis (strain 05ZYH33).